Reading from the N-terminus, the 78-residue chain is MMIIIFIELCRIADSLSWIPKSLRRTSSTFYIPNIIALLKMESQQLSQNSPTFQKHTPIGHINHDQYNSDSGSYYTLM.

This is an uncharacterized protein from Saccharomyces cerevisiae (strain ATCC 204508 / S288c) (Baker's yeast).